Consider the following 451-residue polypeptide: Phenylalanine-4-hydroxylase (451 aa).

Ser16 bears the Phosphoserine; by PKA mark. The ACT domain maps to 35–113 (SLIFSLKEEV…TVHELSRDKK (79 aa)). The Fe cation site is built by His284, His289, and Glu329.

The protein belongs to the biopterin-dependent aromatic amino acid hydroxylase family. In terms of assembly, homodimer and homotetramer. Requires Fe(2+) as cofactor. In terms of processing, phosphorylation at Ser-16 increases basal activity and facilitates activation by the substrate phenylalanine.

The enzyme catalyses (6R)-L-erythro-5,6,7,8-tetrahydrobiopterin + L-phenylalanine + O2 = (4aS,6R)-4a-hydroxy-L-erythro-5,6,7,8-tetrahydrobiopterin + L-tyrosine. The protein operates within amino-acid degradation; L-phenylalanine degradation; acetoacetate and fumarate from L-phenylalanine: step 1/6. Its activity is regulated as follows. N-terminal region of PAH is thought to contain allosteric binding sites for phenylalanine and to constitute an 'inhibitory' domain that regulates the activity of a catalytic domain in the C-terminal portion of the molecule. In terms of biological role, catalyzes the hydroxylation of L-phenylalanine to L-tyrosine. The protein is Phenylalanine-4-hydroxylase (PAH) of Bos taurus (Bovine).